A 275-amino-acid polypeptide reads, in one-letter code: Ribosomal RNA small subunit methyltransferase A (275 aa).

Asparagine 19, leucine 21, glycine 46, glutamate 71, aspartate 94, and asparagine 117 together coordinate S-adenosyl-L-methionine.

It belongs to the class I-like SAM-binding methyltransferase superfamily. rRNA adenine N(6)-methyltransferase family. RsmA subfamily.

It is found in the cytoplasm. It catalyses the reaction adenosine(1518)/adenosine(1519) in 16S rRNA + 4 S-adenosyl-L-methionine = N(6)-dimethyladenosine(1518)/N(6)-dimethyladenosine(1519) in 16S rRNA + 4 S-adenosyl-L-homocysteine + 4 H(+). Functionally, specifically dimethylates two adjacent adenosines (A1518 and A1519) in the loop of a conserved hairpin near the 3'-end of 16S rRNA in the 30S particle. May play a critical role in biogenesis of 30S subunits. The chain is Ribosomal RNA small subunit methyltransferase A from Burkholderia pseudomallei (strain 668).